The sequence spans 139 residues: Ribulose bisphosphate carboxylase small subunit (139 aa).

It belongs to the RuBisCO small chain family. Heterohexadecamer of 8 large and 8 small subunits.

It localises to the plastid. It is found in the chloroplast. Functionally, ruBisCO catalyzes two reactions: the carboxylation of D-ribulose 1,5-bisphosphate, the primary event in carbon dioxide fixation, as well as the oxidative fragmentation of the pentose substrate in the photorespiration process. Both reactions occur simultaneously and in competition at the same active site. Although the small subunit is not catalytic it is essential for maximal activity. The sequence is that of Ribulose bisphosphate carboxylase small subunit from Detonula confervacea (Marine diatom).